Reading from the N-terminus, the 238-residue chain is MTNLSVNINKVATIRNARGGNMPNVLKVAQDCELFGAQGITVHPRPDERHIRYSDVYGLKPLIRTEFNIEGYPCDKFIDLVLKVKPTQVTLVPDAPDAITSNSGWNVKDNFDYLSELVDTFTSQGIRTSIFVGTDLANIELAAKTGTDRIELYTEPYATYYPEDRDKAIAPFVEAAQLAKNLGLGVNAGHDLNLENLAFFNKNIPWLEEVSIGHALICDALYHGLQETIALYKACLNS.

Residues Asn7 and Arg18 each coordinate 3-amino-2-oxopropyl phosphate. The Proton acceptor role is filled by His43. Residues Arg45 and His50 each coordinate 1-deoxy-D-xylulose 5-phosphate. The active-site Proton acceptor is the Glu70. 1-deoxy-D-xylulose 5-phosphate is bound at residue Thr100. Catalysis depends on His190, which acts as the Proton donor. 3-amino-2-oxopropyl phosphate-binding positions include Asp191 and 213–214 (GH).

Belongs to the PNP synthase family. As to quaternary structure, homooctamer; tetramer of dimers.

Its subcellular location is the cytoplasm. The enzyme catalyses 3-amino-2-oxopropyl phosphate + 1-deoxy-D-xylulose 5-phosphate = pyridoxine 5'-phosphate + phosphate + 2 H2O + H(+). The protein operates within cofactor biosynthesis; pyridoxine 5'-phosphate biosynthesis; pyridoxine 5'-phosphate from D-erythrose 4-phosphate: step 5/5. Catalyzes the complicated ring closure reaction between the two acyclic compounds 1-deoxy-D-xylulose-5-phosphate (DXP) and 3-amino-2-oxopropyl phosphate (1-amino-acetone-3-phosphate or AAP) to form pyridoxine 5'-phosphate (PNP) and inorganic phosphate. The chain is Pyridoxine 5'-phosphate synthase from Parabacteroides distasonis (strain ATCC 8503 / DSM 20701 / CIP 104284 / JCM 5825 / NCTC 11152).